The primary structure comprises 458 residues: Argininosuccinate lyase (458 aa).

Belongs to the lyase 1 family. Argininosuccinate lyase subfamily.

The protein resides in the cytoplasm. The catalysed reaction is 2-(N(omega)-L-arginino)succinate = fumarate + L-arginine. The protein operates within amino-acid biosynthesis; L-arginine biosynthesis; L-arginine from L-ornithine and carbamoyl phosphate: step 3/3. This is Argininosuccinate lyase from Citrifermentans bemidjiense (strain ATCC BAA-1014 / DSM 16622 / JCM 12645 / Bem) (Geobacter bemidjiensis).